The sequence spans 362 residues: Spermidine/putrescine import ATP-binding protein PotA (362 aa).

The 232-residue stretch at 6–237 (ISFKHVVKSY…PINHYVADFI (232 aa)) folds into the ABC transporter domain. 39–46 (GPSGCGKT) serves as a coordination point for ATP.

The protein belongs to the ABC transporter superfamily. Spermidine/putrescine importer (TC 3.A.1.11.1) family. The complex is composed of two ATP-binding proteins (PotA), two transmembrane proteins (PotB and PotC) and a solute-binding protein (PotD).

It localises to the cell membrane. The catalysed reaction is ATP + H2O + polyamine-[polyamine-binding protein]Side 1 = ADP + phosphate + polyamineSide 2 + [polyamine-binding protein]Side 1.. Functionally, part of the ABC transporter complex PotABCD involved in spermidine/putrescine import. Responsible for energy coupling to the transport system. The polypeptide is Spermidine/putrescine import ATP-binding protein PotA (Ligilactobacillus salivarius (strain UCC118) (Lactobacillus salivarius)).